A 211-amino-acid polypeptide reads, in one-letter code: ATP phosphoribosyltransferase (211 aa).

The protein belongs to the ATP phosphoribosyltransferase family. Short subfamily. In terms of assembly, heteromultimer composed of HisG and HisZ subunits.

The protein localises to the cytoplasm. The catalysed reaction is 1-(5-phospho-beta-D-ribosyl)-ATP + diphosphate = 5-phospho-alpha-D-ribose 1-diphosphate + ATP. It participates in amino-acid biosynthesis; L-histidine biosynthesis; L-histidine from 5-phospho-alpha-D-ribose 1-diphosphate: step 1/9. Functionally, catalyzes the condensation of ATP and 5-phosphoribose 1-diphosphate to form N'-(5'-phosphoribosyl)-ATP (PR-ATP). Has a crucial role in the pathway because the rate of histidine biosynthesis seems to be controlled primarily by regulation of HisG enzymatic activity. This Bacillus cereus (strain 03BB102) protein is ATP phosphoribosyltransferase.